Reading from the N-terminus, the 336-residue chain is Glyceraldehyde-3-phosphate dehydrogenase (336 aa).

NAD(+)-binding positions include 12–13 (RI), D34, R78, and T121. D-glyceraldehyde 3-phosphate-binding positions include 151 to 153 (SCT), T182, R199, 212 to 213 (TG), and R235. The Nucleophile role is filled by C152. N316 contributes to the NAD(+) binding site.

The protein belongs to the glyceraldehyde-3-phosphate dehydrogenase family. As to quaternary structure, homotetramer.

The protein resides in the cytoplasm. It carries out the reaction D-glyceraldehyde 3-phosphate + phosphate + NAD(+) = (2R)-3-phospho-glyceroyl phosphate + NADH + H(+). Its pathway is carbohydrate degradation; glycolysis; pyruvate from D-glyceraldehyde 3-phosphate: step 1/5. Catalyzes the oxidative phosphorylation of glyceraldehyde 3-phosphate (G3P) to 1,3-bisphosphoglycerate (BPG) using the cofactor NAD. The first reaction step involves the formation of a hemiacetal intermediate between G3P and a cysteine residue, and this hemiacetal intermediate is then oxidized to a thioester, with concomitant reduction of NAD to NADH. The reduced NADH is then exchanged with the second NAD, and the thioester is attacked by a nucleophilic inorganic phosphate to produce BPG. The protein is Glyceraldehyde-3-phosphate dehydrogenase (gap) of Streptococcus pyogenes serotype M1.